The following is a 516-amino-acid chain: Maturase K (516 aa).

It belongs to the intron maturase 2 family. MatK subfamily.

It is found in the plastid. The protein localises to the chloroplast. Functionally, usually encoded in the trnK tRNA gene intron. Probably assists in splicing its own and other chloroplast group II introns. The polypeptide is Maturase K (Colchicum speciosum (Giant meadow saffron)).